The chain runs to 264 residues: Polyneuridine aldehyde esterase (264 aa).

Positions 1-6 (MHSAAN) are excised as a propeptide. Positions 12–122 (HFVLVHGGCL…MMPDPNHSLT (111 aa)) constitute an AB hydrolase-1 domain. Residues S87, D216, and H244 contribute to the active site. S87 lines the 16-epivellosimine pocket.

This sequence belongs to the AB hydrolase superfamily. Homodimer; homodimerizes in aqueous solutions at pH 7.0. Mainly expressed in roots and, to a lower level, in leaves.

The enzyme catalyses polyneuridine aldehyde + H2O = 16-epivellosimine + methanol + CO2. It participates in alkaloid biosynthesis; ajmaline biosynthesis. Inhibited by DEPC and HgCl(2). Its function is as follows. Hydrolase involved in the biosynthesis of ajmaline-type monoterpenoid indole alkaloids (MIAs) natural products, important plant-derived pharmaceuticals used in the therapy of heart disorders. Catalyzes the hydrolysis of polyneuridine aldehyde into epi-vellosimine, precursor of vomilenine, an intermediate chemical in the biosynthesis of ajmaline. This Rauvolfia serpentina (Serpentine wood) protein is Polyneuridine aldehyde esterase.